We begin with the raw amino-acid sequence, 237 residues long: Phosphatidylserine decarboxylase proenzyme (237 aa).

S206 (schiff-base intermediate with substrate; via pyruvic acid) is an active-site residue. S206 carries the pyruvic acid (Ser); by autocatalysis modification.

It belongs to the phosphatidylserine decarboxylase family. PSD-A subfamily. As to quaternary structure, heterodimer of a large membrane-associated beta subunit and a small pyruvoyl-containing alpha subunit. Pyruvate serves as cofactor. Is synthesized initially as an inactive proenzyme. Formation of the active enzyme involves a self-maturation process in which the active site pyruvoyl group is generated from an internal serine residue via an autocatalytic post-translational modification. Two non-identical subunits are generated from the proenzyme in this reaction, and the pyruvate is formed at the N-terminus of the alpha chain, which is derived from the carboxyl end of the proenzyme. The post-translation cleavage follows an unusual pathway, termed non-hydrolytic serinolysis, in which the side chain hydroxyl group of the serine supplies its oxygen atom to form the C-terminus of the beta chain, while the remainder of the serine residue undergoes an oxidative deamination to produce ammonia and the pyruvoyl prosthetic group on the alpha chain.

The protein localises to the cell membrane. It catalyses the reaction a 1,2-diacyl-sn-glycero-3-phospho-L-serine + H(+) = a 1,2-diacyl-sn-glycero-3-phosphoethanolamine + CO2. The protein operates within phospholipid metabolism; phosphatidylethanolamine biosynthesis; phosphatidylethanolamine from CDP-diacylglycerol: step 2/2. Catalyzes the formation of phosphatidylethanolamine (PtdEtn) from phosphatidylserine (PtdSer). This is Phosphatidylserine decarboxylase proenzyme from Nocardia farcinica (strain IFM 10152).